Here is a 360-residue protein sequence, read N- to C-terminus: Phosphoserine aminotransferase (360 aa).

Position 42 (R42) interacts with L-glutamate. Pyridoxal 5'-phosphate is bound by residues W102, T152, D171, and Q194. Residue K195 is modified to N6-(pyridoxal phosphate)lysine. 237–238 contacts pyridoxal 5'-phosphate; that stretch reads NT.

It belongs to the class-V pyridoxal-phosphate-dependent aminotransferase family. SerC subfamily. Homodimer. Pyridoxal 5'-phosphate is required as a cofactor.

The protein resides in the cytoplasm. It carries out the reaction O-phospho-L-serine + 2-oxoglutarate = 3-phosphooxypyruvate + L-glutamate. The catalysed reaction is 4-(phosphooxy)-L-threonine + 2-oxoglutarate = (R)-3-hydroxy-2-oxo-4-phosphooxybutanoate + L-glutamate. It functions in the pathway amino-acid biosynthesis; L-serine biosynthesis; L-serine from 3-phospho-D-glycerate: step 2/3. The protein operates within cofactor biosynthesis; pyridoxine 5'-phosphate biosynthesis; pyridoxine 5'-phosphate from D-erythrose 4-phosphate: step 3/5. Functionally, catalyzes the reversible conversion of 3-phosphohydroxypyruvate to phosphoserine and of 3-hydroxy-2-oxo-4-phosphonooxybutanoate to phosphohydroxythreonine. This chain is Phosphoserine aminotransferase, found in Coxiella burnetii (strain CbuK_Q154) (Coxiella burnetii (strain Q154)).